The primary structure comprises 393 residues: Alpha-pyrone synthesis polyketide synthase-like Pks18 (393 aa).

Positions 1–26 (MNVSAESGAPRRAGQRHEVGLAQLPP) are disordered. Cysteine 175 acts as the Nucleophile in catalysis. Residue histidine 221 coordinates substrate.

It belongs to the thiolase-like superfamily. Chalcone/stilbene synthases family. Homodimer.

The protein operates within lipid metabolism; fatty acid biosynthesis. Involved in the biosynthesis of tri- and tetraketide alpha-pyrones. Pks18 catalyzes the extension of medium- and long-chain aliphatic acyl-CoA substrates by using malonyl-CoA as an extender molecule to synthesize polyketide products. The polypeptide is Alpha-pyrone synthesis polyketide synthase-like Pks18 (pks18) (Mycobacterium bovis (strain ATCC BAA-935 / AF2122/97)).